Consider the following 501-residue polypeptide: uncharacterized protein (501 aa).

A BAR domain is found at 14–237 (EKFGFDRQKT…GFSKKRDNVN (224 aa)). Thr285 is subject to Phosphothreonine. Disordered regions lie at residues 302–321 (IASS…DVSD) and 329–414 (SAVD…RSYS). Over residues 309 to 320 (QHTEDNYNKDVS) the composition is skewed to basic and acidic residues. Polar residues predominate over residues 390–402 (SQCNVSPSPSNIS). Ser414 carries the post-translational modification Phosphoserine. The SH3 domain maps to 421 to 487 (SSRKVVRMKY…PSNYCVPAHP (67 aa)).

Its subcellular location is the cytoplasm. This is an uncharacterized protein from Schizosaccharomyces pombe (strain 972 / ATCC 24843) (Fission yeast).